The sequence spans 80 residues: UPF0181 protein SG1330 (80 aa).

Positions 58 to 80 are disordered; it reads TEVLETPAARAETDPYDSNPDDD.

The protein belongs to the UPF0181 family.

The sequence is that of UPF0181 protein SG1330 from Sodalis glossinidius (strain morsitans).